Here is a 120-residue protein sequence, read N- to C-terminus: Phosphoribosyl-ATP pyrophosphatase (120 aa).

The disordered stretch occupies residues 97–120 (REGTSGLVEKASRPAKKDSGTADS). Residues 106 to 120 (KASRPAKKDSGTADS) show a composition bias toward basic and acidic residues.

The protein belongs to the PRA-PH family.

It is found in the cytoplasm. It catalyses the reaction 1-(5-phospho-beta-D-ribosyl)-ATP + H2O = 1-(5-phospho-beta-D-ribosyl)-5'-AMP + diphosphate + H(+). It functions in the pathway amino-acid biosynthesis; L-histidine biosynthesis; L-histidine from 5-phospho-alpha-D-ribose 1-diphosphate: step 2/9. The sequence is that of Phosphoribosyl-ATP pyrophosphatase from Rhodopirellula baltica (strain DSM 10527 / NCIMB 13988 / SH1).